The following is a 105-amino-acid chain: Nucleoid-associated protein Dred_0043 (105 aa).

The protein belongs to the YbaB/EbfC family. In terms of assembly, homodimer.

The protein resides in the cytoplasm. It is found in the nucleoid. In terms of biological role, binds to DNA and alters its conformation. May be involved in regulation of gene expression, nucleoid organization and DNA protection. The sequence is that of Nucleoid-associated protein Dred_0043 from Desulforamulus reducens (strain ATCC BAA-1160 / DSM 100696 / MI-1) (Desulfotomaculum reducens).